The sequence spans 202 residues: Holliday junction branch migration complex subunit RuvA (202 aa).

Residues 1 to 62 form a domain I region; it reads MYEYLHGLIT…DTAQTLYGFS (62 aa). The segment at 63–141 is domain II; sequence DFAEKQLFLK…DLAPATDDNT (79 aa). The tract at residues 142 to 151 is flexible linker; the sequence is LFTPEVAPTT. The interval 152-202 is domain III; that stretch reads TENPQLADALAALTALGYRETAVKKITAQLRQFNGQTTNDYLSEGLRLLTK.

This sequence belongs to the RuvA family. In terms of assembly, homotetramer. Forms an RuvA(8)-RuvB(12)-Holliday junction (HJ) complex. HJ DNA is sandwiched between 2 RuvA tetramers; dsDNA enters through RuvA and exits via RuvB. An RuvB hexamer assembles on each DNA strand where it exits the tetramer. Each RuvB hexamer is contacted by two RuvA subunits (via domain III) on 2 adjacent RuvB subunits; this complex drives branch migration. In the full resolvosome a probable DNA-RuvA(4)-RuvB(12)-RuvC(2) complex forms which resolves the HJ.

The protein localises to the cytoplasm. The RuvA-RuvB-RuvC complex processes Holliday junction (HJ) DNA during genetic recombination and DNA repair, while the RuvA-RuvB complex plays an important role in the rescue of blocked DNA replication forks via replication fork reversal (RFR). RuvA specifically binds to HJ cruciform DNA, conferring on it an open structure. The RuvB hexamer acts as an ATP-dependent pump, pulling dsDNA into and through the RuvAB complex. HJ branch migration allows RuvC to scan DNA until it finds its consensus sequence, where it cleaves and resolves the cruciform DNA. This Levilactobacillus brevis (strain ATCC 367 / BCRC 12310 / CIP 105137 / JCM 1170 / LMG 11437 / NCIMB 947 / NCTC 947) (Lactobacillus brevis) protein is Holliday junction branch migration complex subunit RuvA.